Consider the following 257-residue polypeptide: Transmembrane protein C257L (257 aa).

Helical transmembrane passes span 123–143 (LELL…FTAL) and 163–183 (IMIF…YVLV).

The protein belongs to the asfivirus C257R family.

It localises to the host membrane. The protein localises to the virion. The sequence is that of Transmembrane protein C257L from African swine fever virus (isolate Pig/Kenya/KEN-50/1950) (ASFV).